The chain runs to 611 residues: Elongation factor 4 (611 aa).

Residues 11–193 form the tr-type G domain; it reads EKIRNFSIIA…QVVEYVPAPS (183 aa). Residues 23–28 and 140–143 contribute to the GTP site; these read DHGKST and NKID.

Belongs to the TRAFAC class translation factor GTPase superfamily. Classic translation factor GTPase family. LepA subfamily.

The protein resides in the cell membrane. The catalysed reaction is GTP + H2O = GDP + phosphate + H(+). Required for accurate and efficient protein synthesis under certain stress conditions. May act as a fidelity factor of the translation reaction, by catalyzing a one-codon backward translocation of tRNAs on improperly translocated ribosomes. Back-translocation proceeds from a post-translocation (POST) complex to a pre-translocation (PRE) complex, thus giving elongation factor G a second chance to translocate the tRNAs correctly. Binds to ribosomes in a GTP-dependent manner. The chain is Elongation factor 4 from Enterococcus faecalis (strain ATCC 700802 / V583).